Reading from the N-terminus, the 243-residue chain is Uridylate kinase (243 aa).

15 to 18 (KLSG) provides a ligand contact to ATP. Positions 23–28 (GEEGFG) are involved in allosteric activation by GTP. Gly-57 contributes to the UMP binding site. Positions 58 and 62 each coordinate ATP. Residues Asp-77 and 138–145 (TGNPFFTT) each bind UMP. Residues Thr-165, Phe-171, and Asp-174 each coordinate ATP.

It belongs to the UMP kinase family. In terms of assembly, homohexamer.

It is found in the cytoplasm. It catalyses the reaction UMP + ATP = UDP + ADP. The protein operates within pyrimidine metabolism; CTP biosynthesis via de novo pathway; UDP from UMP (UMPK route): step 1/1. With respect to regulation, allosterically activated by GTP. Inhibited by UTP. Catalyzes the reversible phosphorylation of UMP to UDP. This chain is Uridylate kinase, found in Aliivibrio fischeri (strain ATCC 700601 / ES114) (Vibrio fischeri).